The following is a 598-amino-acid chain: Ceramide transfer protein (598 aa).

Polar residues predominate over residues 1–11 (MSDNQSWNSSG). The tract at residues 1 to 24 (MSDNQSWNSSGSEEDPETESGPPV) is disordered. Residues 23-117 (PVERCGVLSK…WIDAIEQHKT (95 aa)) enclose the PH domain. At S126 the chain carries Phosphoserine. Residue S132 is modified to Phosphoserine; by PKD. At S135 the chain carries Phosphoserine. Residues 202 to 221 (DDEDDFPTTRSDGDFLHNTN) are disordered. A coiled-coil region spans residues 268–301 (KREESWQKRHDKEMEKRRRLEEAYKNAMAELKKK). S315 is modified (phosphoserine). The FFAT motif lies at 321–327 (EFFDAVE). Positions 363-592 (GTHRFVQKVE…FTSYVQEKTA (230 aa)) constitute an START domain. Residues E446, Q467, N504, and Y553 each contribute to the an N-acylsphing-4-enine site.

In terms of assembly, interacts with VAPA and VAPB. Interaction with VAPB is less efficient than with VAPA. Interacts (via FFAT motif) with the MOSPD2 (via MSP domain). Phosphorylation on Ser-132 decreases the affinity toward phosphatidylinositol 4-phosphate at Golgi membranes and reduces ceramide transfer activity. Inactivated by hyperphosphorylation of serine residues by CSNK1G2/CK1 that triggers dissociation from the Golgi complex, thus down-regulating ER-to-Golgi transport of ceramide and sphingomyelin synthesis.

It is found in the cytoplasm. It localises to the golgi apparatus. The protein resides in the endoplasmic reticulum. The catalysed reaction is N-hexadecanoylsphing-4-enine(in) = N-hexadecanoylsphing-4-enine(out). Shelters ceramides and diacylglycerol lipids inside its START domain and mediates the intracellular trafficking of ceramides and diacylglycerol lipids in a non-vesicular manner. The protein is Ceramide transfer protein (CERT1) of Cricetulus griseus (Chinese hamster).